Reading from the N-terminus, the 475-residue chain is Eukaryotic translation initiation factor 2 subunit 3 (475 aa).

Residues 38 to 247 (QATINIGTIG…IVNKIPVPPR (210 aa)) enclose the tr-type G domain. The G1 stretch occupies residues 47–54 (GHVAHGKS). 50–55 (AHGKST) contributes to the GTP binding site. Residues 75 to 79 (NITIK) form a G2 region. The tract at residues 133-136 (DCPG) is G3. Residues 189–192 (NKID) and 224–226 (SAQ) each bind GTP. The interval 189 to 192 (NKID) is G4. Positions 224–226 (SAQ) are G5. The segment at 456–468 (GQIFGGKTITPVL) is interacts with CDC123.

The protein belongs to the TRAFAC class translation factor GTPase superfamily. Classic translation factor GTPase family. EIF2G subfamily. As to quaternary structure, eukaryotic translation initiation factor 2 eIF2 is a heterotrimeric complex composed of an alpha, a beta and a gamma subunit. The factors eIF-1, eIF-2, eIF-3, TIF5/eIF-5 and methionyl-tRNAi form a multifactor complex (MFC) that may bind to the 40S ribosome.

It is found in the cytoplasm. The protein localises to the cytosol. The catalysed reaction is GTP + H2O = GDP + phosphate + H(+). As a subunit of eukaryotic initiation factor 2 eIF2, involved in the early steps of protein synthesis. In the presence of GTP, eIF-2 forms a ternary complex with initiator tRNA Met-tRNAi and then recruits the 40S ribosomal complex and initiation factors eIF-1, eIF-1A and eIF-3 to form the 43S pre-initiation complex (43S PIC), a step that determines the rate of protein translation. The 43S PIC binds to mRNA and scans downstream to the initiation codon, where it forms a 48S initiation complex by codon-anticodon base pairing. This leads to the displacement of eIF-1 to allow GTPase-activating protein (GAP) eIF-5-mediated hydrolysis of eIF2-bound GTP. Hydrolysis of GTP and release of Pi, which makes GTP hydrolysis irreversible, causes the release of the eIF-2-GDP binary complex from the 40S subunit, an event that is essential for the subsequent joining of the 60S ribosomal subunit to form an elongation-competent 80S ribosome. In order for eIF-2 to recycle and catalyze another round of initiation, the GDP bound to eIF-2 must be exchanged with GTP by way of a reaction catalyzed by GDP-GTP exchange factor (GEF) eIF-2B. The polypeptide is Eukaryotic translation initiation factor 2 subunit 3 (Drosophila melanogaster (Fruit fly)).